A 1388-amino-acid polypeptide reads, in one-letter code: Kinesin-like protein KIF15 (1388 aa).

The segment at 1 to 25 (MAPGCKTELRSVTNGQSNQPSNEGD) is disordered. Residues 10-22 (RSVTNGQSNQPSN) are compositionally biased toward polar residues. The Kinesin motor domain occupies 26 to 363 (AIKVFVRIRP…LNFAQRAKLI (338 aa)). 109–116 (GQTGSGKT) is an ATP binding site. Residues 368 to 1388 (VVNEDTQGNV…FLKEKKRSES (1021 aa)) adopt a coiled-coil conformation. Position 399 is a phosphothreonine (threonine 399). Serine 568 carries the post-translational modification Phosphoserine. Lysine 1009 bears the N6-acetyllysine mark. 2 positions are modified to phosphoserine: serine 1141 and serine 1169. Residues 1228 to 1250 (QKENSDQNHPDNQQLKNEQEESI) form a disordered region.

This sequence belongs to the TRAFAC class myosin-kinesin ATPase superfamily. Kinesin family. KLP2 subfamily. In terms of assembly, interacts with MKI67 and TPX2. Expressed in testis, colon, thymus and in breast cancer.

It is found in the cytoplasm. Its subcellular location is the cytoskeleton. The protein resides in the spindle. Plus-end directed kinesin-like motor enzyme involved in mitotic spindle assembly. This is Kinesin-like protein KIF15 (KIF15) from Homo sapiens (Human).